The primary structure comprises 421 residues: Lipid II:glycine glycyltransferase (421 aa).

Belongs to the FemABX family. Monomer.

The protein localises to the cytoplasm. The catalysed reaction is beta-D-GlcNAc-(1-&gt;4)-Mur2Ac(oyl-L-Ala-D-isoglutaminyl-L-Lys-D-Ala-D-Ala)-di-trans,octa-cis-undecaprenyl diphosphate + glycyl-tRNA(Gly) = beta-D-GlcNAc-(1-&gt;4)-Mur2Ac(oyl-L-Ala-D-isoglutaminyl-L-Lys-(N(6)-Gly)-D-Ala-D-Ala)-di-trans,octa-cis-undecaprenyl diphosphate + tRNA(Gly) + H(+). In terms of biological role, catalyzes the incorporation of the first glycine of the pentaglycine interpeptide bridge, which is characteristic of the S.aureus peptidoglycan. This glycine is added to the epsilon-amino group of the L-lysine of the membrane-bound lipid II intermediate (GlcNAc-(beta-1,4)-N-acetylmuramic acid(-L-Ala-D-iGln-L-Lys-D-Ala-D-Ala)-pyrophosphoryl-undecaprenol), using glycyl-tRNA(Gly) as donor, in a ribosome-independent mechanism. Involved in methicillin resistance. The polypeptide is Lipid II:glycine glycyltransferase (femX) (Staphylococcus aureus (strain COL)).